The primary structure comprises 365 residues: UDP-N-acetylglucosamine--N-acetylmuramyl-(pentapeptide) pyrophosphoryl-undecaprenol N-acetylglucosamine transferase (365 aa).

UDP-N-acetyl-alpha-D-glucosamine-binding positions include Thr10–Gly12, Asn128, Arg170, Ser199, Ile250, and Gln295.

It belongs to the glycosyltransferase 28 family. MurG subfamily.

The protein localises to the cell inner membrane. The enzyme catalyses di-trans,octa-cis-undecaprenyl diphospho-N-acetyl-alpha-D-muramoyl-L-alanyl-D-glutamyl-meso-2,6-diaminopimeloyl-D-alanyl-D-alanine + UDP-N-acetyl-alpha-D-glucosamine = di-trans,octa-cis-undecaprenyl diphospho-[N-acetyl-alpha-D-glucosaminyl-(1-&gt;4)]-N-acetyl-alpha-D-muramoyl-L-alanyl-D-glutamyl-meso-2,6-diaminopimeloyl-D-alanyl-D-alanine + UDP + H(+). The protein operates within cell wall biogenesis; peptidoglycan biosynthesis. Functionally, cell wall formation. Catalyzes the transfer of a GlcNAc subunit on undecaprenyl-pyrophosphoryl-MurNAc-pentapeptide (lipid intermediate I) to form undecaprenyl-pyrophosphoryl-MurNAc-(pentapeptide)GlcNAc (lipid intermediate II). The polypeptide is UDP-N-acetylglucosamine--N-acetylmuramyl-(pentapeptide) pyrophosphoryl-undecaprenol N-acetylglucosamine transferase (Chlorobium luteolum (strain DSM 273 / BCRC 81028 / 2530) (Pelodictyon luteolum)).